The sequence spans 186 residues: UPF0340 protein SEQ_1951 (186 aa).

This sequence belongs to the UPF0340 family.

The sequence is that of UPF0340 protein SEQ_1951 from Streptococcus equi subsp. equi (strain 4047).